We begin with the raw amino-acid sequence, 45 residues long: DNA replication protein repEB (45 aa).

Its function is as follows. Involved in T4 DNA replication. Important for the priming of leading strand DNA synthesis at oriE. Binds to ssDNA. The polypeptide is DNA replication protein repEB (repEB) (Enterobacteria phage T4 (Bacteriophage T4)).